The sequence spans 322 residues: Ferredoxin--NADP reductase (322 aa).

Positions 87, 119, 279, and 320 each coordinate FAD.

Belongs to the ferredoxin--NADP reductase type 2 family. In terms of assembly, homodimer. The cofactor is FAD.

It carries out the reaction 2 reduced [2Fe-2S]-[ferredoxin] + NADP(+) + H(+) = 2 oxidized [2Fe-2S]-[ferredoxin] + NADPH. The protein is Ferredoxin--NADP reductase of Streptococcus suis (strain 98HAH33).